Consider the following 102-residue polypeptide: A-type ATP synthase subunit F (102 aa).

Belongs to the V-ATPase F subunit family. As to quaternary structure, has multiple subunits with at least A(3), B(3), C, D, E, F, H, I and proteolipid K(x).

It is found in the cell membrane. Its function is as follows. Component of the A-type ATP synthase that produces ATP from ADP in the presence of a proton gradient across the membrane. In Thermococcus onnurineus (strain NA1), this protein is A-type ATP synthase subunit F.